We begin with the raw amino-acid sequence, 1480 residues long: MQRSPLEKASVVSKLFFSWTRPILRKGYRQRLELSDIYQIPSVDSADNLSEKLEREWDRELASKKNPKLINALRRCFFWRFMFYGIFLYLGEVTKAVQPLLLGRIIASYDPDNKEERSIAIYLGIGLCLLFIVRTLLLHPAIFGLHHIGMQMRIAMFSLIYKKTLKLSSRVLDKISIGQLVSLLSNNLNKFDEGLALAHFVWIAPLQVALLMGLIWELLQASAFCGLGFLIVLALFQAGLGRMMMKYRDQRAGKISERLVITSEMIENIQSVKAYCWEEAMEKMIENLRQTELKLTRKAAYVRYFNSSAFFFSGFFVVFLSVLPYALIKGIILRKIFTTISFCIVLRMAVTRQFPWAVQTWYDSLGAINKIQDFLQKQEYKTLEYNLTTTEVVMENVTAFWEEGFGELFEKAKQNNNNRKTSNGDDSLFFSNFSLLGTPVLKDINFKIERGQLLAVAGSTGAGKTSLLMMIMGELEPSEGKIKHSGRISFCSQFSWIMPGTIKENIIFGVSYDEYRYRSVIKACQLEEDISKFAEKDNIVLGEGGITLSGGQRARISLARAVYKDADLYLLDSPFGYLDVLTEKEIFESCVCKLMANKTRILVTSKMEHLKKADKILILHEGSSYFYGTFSELQNLRPDFSSKLMGCDSFDQFSAERRNSILTETLRRFSLEGDAPVSWTETKKQSFKQTGEFGEKRKNSILNPINSIRKFSIVQKTPLQMNGIEEDSDEPLERRLSLVPDSEQGEAILPRISVISTGPTLQARRRQSVLNLMTHSVNQGQNIHRKTTASTRKVSLAPQANLTELDIYSRRLSQETGLEISEEINEEDLKECFFDDMESIPAVTTWNTYLRYITVHKSLIFVLIWCLVIFLAEVAASLVVLWLLGNTPLQDKGNSTHSRNNSYAVIITSTSSYYVFYIYVGVADTLLAMGFFRGLPLVHTLITVSKILHHKMLHSVLQAPMSTLNTLKAGGILNRFSKDIAILDDLLPLTIFDFIQLLLIVIGAIAVVAVLQPYIFVATVPVIVAFIMLRAYFLQTSQQLKQLESEGRSPIFTHLVTSLKGLWTLRAFGRQPYFETLFHKALNLHTANWFLYLSTLRWFQMRIEMIFVIFFIAVTFISILTTGEGEGRVGIILTLAMNIMSTLQWAVNSSIDVDSLMRSVSRVFKFIDMPTEGKPTKSTKPYKNGQLSKVMIIENSHVKKDYIWPSGGQMTVKDLTAKYTEGGNAILENISFSISPGQRVGLLGRTGSGKSTLLSAFLRLLNTEGEIQIDGVSWDSITLQQWRKAFGVIPQKVFIFSGTFRKNLDPYEQWSDQEIWKVADEVGLRSVIEQFPGKLDFVLVDGGCVLSHGHKQLMCLARSVLSKAKILLLDEPSAHLDPVAYQIIRRTLKQAFADCTVILCEHRIEAMLECQQFLVIEENKVRQYDSIQKLLNERSLFRQAISPSDRVKLFPHRNSSKCKSKPQIAALKEETEEEVQDTRL.

The Cytoplasmic segment spans residues 1–77 (MQRSPLEKAS…KLINALRRCF (77 aa)). Residues 78 to 98 (FWRFMFYGIFLYLGEVTKAVQ) traverse the membrane as a helical segment. One can recognise an ABC transmembrane type-1 1 domain in the interval 81-365 (FMFYGIFLYL…WAVQTWYDSL (285 aa)). At 99-122 (PLLLGRIIASYDPDNKEERSIAIY) the chain is on the extracellular side. The helical transmembrane segment at 123-146 (LGIGLCLLFIVRTLLLHPAIFGLH) threads the bilayer. The Cytoplasmic segment spans residues 147 to 195 (HIGMQMRIAMFSLIYKKTLKLSSRVLDKISIGQLVSLLSNNLNKFDEGL). The chain crosses the membrane as a helical span at residues 196–216 (ALAHFVWIAPLQVALLMGLIW). Over 217–222 (ELLQAS) the chain is Extracellular. A helical transmembrane segment spans residues 223-243 (AFCGLGFLIVLALFQAGLGRM). Residues 244–298 (MMKYRDQRAGKISERLVITSEMIENIQSVKAYCWEEAMEKMIENLRQTELKLTRK) are Cytoplasmic-facing. Residues 299-319 (AAYVRYFNSSAFFFSGFFVVF) traverse the membrane as a helical segment. At 320-339 (LSVLPYALIKGIILRKIFTT) the chain is on the extracellular side. Residues 340–358 (ISFCIVLRMAVTRQFPWAV) traverse the membrane as a helical segment. The Cytoplasmic portion of the chain corresponds to 359–858 (QTWYDSLGAI…YLRYITVHKS (500 aa)). Residues Trp-401, Ser-434, 458–465 (GSTGAGKT), and Gln-493 contribute to the ATP site. The 224-residue stretch at 423–646 (NGDDSLFFSN…RPDFSSKLMG (224 aa)) folds into the ABC transporter 1 domain. Cys-524 carries the S-palmitoyl cysteine lipid modification. Residues Ser-549 and Ser-660 each carry the phosphoserine modification. The tract at residues 654 to 831 (SAERRNSILT…EEINEEDLKE (178 aa)) is disordered R region. Ser-670 is modified (phosphoserine; by PKA). The residue at position 686 (Ser-686) is a Phosphoserine. Lys-688 is covalently cross-linked (Glycyl lysine isopeptide (Lys-Gly) (interchain with G-Cter in ubiquitin)). A phosphoserine mark is found at Ser-700 and Ser-712. Phosphothreonine is present on Thr-717. A phosphoserine mark is found at Ser-737, Ser-753, Ser-768, Ser-790, Ser-795, and Ser-813. The chain crosses the membrane as a helical span at residues 859–879 (LIFVLIWCLVIFLAEVAASLV). Positions 859 to 1155 (LIFVLIWCLV…AVNSSIDVDS (297 aa)) constitute an ABC transmembrane type-1 2 domain. The Extracellular portion of the chain corresponds to 880–918 (VLWLLGNTPLQDKGNSTHSRNNSYAVIITSTSSYYVFYI). Asn-894 and Asn-900 each carry an N-linked (GlcNAc...) asparagine glycan. The chain crosses the membrane as a discontinuously helical span at residues 919–939 (YVGVADTLLAMGFFRGLPLVH). The Cytoplasmic segment spans residues 940–990 (TLITVSKILHHKMLHSVLQAPMSTLNTLKAGGILNRFSKDIAILDDLLPLT). Residues 991 to 1011 (IFDFIQLLLIVIGAIAVVAVL) traverse the membrane as a helical segment. Residues 1012-1013 (QP) are Extracellular-facing. The chain crosses the membrane as a helical span at residues 1014–1034 (YIFVATVPVIVAFIMLRAYFL). The Cytoplasmic segment spans residues 1035-1095 (QTSQQLKQLE…TANWFLYLST (61 aa)). A helical transmembrane segment spans residues 1096 to 1116 (LRWFQMRIEMIFVIFFIAVTF). Over 1117–1130 (ISILTTGEGEGRVG) the chain is Extracellular. Residues 1131 to 1151 (IILTLAMNIMSTLQWAVNSSI) form a helical membrane-spanning segment. Topologically, residues 1152-1480 (DVDSLMRSVS…TEEEVQDTRL (329 aa)) are cytoplasmic. The ABC transporter 2 domain occupies 1210–1443 (MTVKDLTAKY…RSLFRQAISP (234 aa)). ATP is bound by residues Tyr-1219 and 1244-1251 (GRTGSGKS). Residues 1386–1480 (RTLKQAFADC…TEEEVQDTRL (95 aa)) form an interaction with GORASP2 region. The S-palmitoyl cysteine moiety is linked to residue Cys-1395. Phosphoserine occurs at positions 1444 and 1456. The disordered stretch occupies residues 1452–1480 (HRNSSKCKSKPQIAALKEETEEEVQDTRL). A compositionally biased stretch (acidic residues) spans 1470 to 1480 (ETEEEVQDTRL). Positions 1478 to 1480 (TRL) match the PDZ-binding motif.

This sequence belongs to the ABC transporter superfamily. ABCC family. CFTR transporter (TC 3.A.1.202) subfamily. Monomer; does not require oligomerization for channel activity. May form oligomers in the membrane. Interacts with SLC26A3, SLC26A6 and NHERF1. Interacts with SHANK2. Interacts with MYO6. Interacts (via C-terminus) with GOPC (via PDZ domain); this promotes CFTR internalization and thereby decreases channel activity. Interacts with SLC4A7 through NHERF1. Found in a complex with MYO5B and RAB11A. Interacts with ANO1. Interacts with SLC26A8. Interacts with AHCYL1; the interaction increases CFTR activity. Interacts with CSE1L. The core-glycosylated form interacts with GORASP2 (via PDZ GRASP-type 1 domain) in respone to ER stress. Interacts with MARCHF2; the interaction leads to CFTR ubiqtuitination and degradation. Interacts with ADGRG2. In terms of processing, N-glycosylated. Phosphorylated; cAMP treatment promotes phosphorylation and activates the channel. Dephosphorylation decreases the ATPase activity (in vitro). Phosphorylation at PKA sites activates the channel. Phosphorylation at PKC sites enhances the response to phosphorylation by PKA. Phosphorylated by AMPK; this inhibits channel activity. Post-translationally, ubiquitinated, leading to its degradation in the lysosome. Deubiquitination by USP10 in early endosomes enhances its endocytic recycling to the cell membrane. Ubiquitinated by RNF185 during ER stress. Ubiquitinated by MARCHF2.

The protein resides in the apical cell membrane. Its subcellular location is the early endosome membrane. The protein localises to the cell membrane. It is found in the recycling endosome membrane. It localises to the endoplasmic reticulum membrane. The protein resides in the nucleus. It catalyses the reaction ATP + H2O + closed Cl(-) channel = ADP + phosphate + open Cl(-) channel.. The enzyme catalyses chloride(in) = chloride(out). It carries out the reaction hydrogencarbonate(in) = hydrogencarbonate(out). The catalysed reaction is ATP + H2O = ADP + phosphate + H(+). Epithelial ion channel that plays an important role in the regulation of epithelial ion and water transport and fluid homeostasis. Mediates the transport of chloride ions across the cell membrane. Possesses an intrinsic ATPase activity and utilizes ATP to gate its channel; the passive flow of anions through the channel is gated by cycles of ATP binding and hydrolysis by the ATP-binding domains. The ion channel is also permeable to HCO(3)(-); selectivity depends on the extracellular chloride concentration. Exerts its function also by modulating the activity of other ion channels and transporters. Contributes to the regulation of the pH and the ion content of the epithelial fluid layer. Modulates the activity of the epithelial sodium channel (ENaC) complex, in part by regulating the cell surface expression of the ENaC complex. May regulate bicarbonate secretion and salvage in epithelial cells by regulating the transporter SLC4A7. Can inhibit the chloride channel activity of ANO1. Plays a role in the chloride and bicarbonate homeostasis during sperm epididymal maturation and capacitation. The polypeptide is Cystic fibrosis transmembrane conductance regulator (Pan troglodytes (Chimpanzee)).